We begin with the raw amino-acid sequence, 377 residues long: Phosphoserine aminotransferase (377 aa).

L-glutamate is bound at residue Arg43. Residues Trp105, Thr164, Asp189, and Gln212 each coordinate pyridoxal 5'-phosphate. Lys213 bears the N6-(pyridoxal phosphate)lysine mark. 254-255 contributes to the pyridoxal 5'-phosphate binding site; the sequence is NT.

The protein belongs to the class-V pyridoxal-phosphate-dependent aminotransferase family. SerC subfamily. As to quaternary structure, homodimer. Requires pyridoxal 5'-phosphate as cofactor.

It localises to the cytoplasm. It carries out the reaction O-phospho-L-serine + 2-oxoglutarate = 3-phosphooxypyruvate + L-glutamate. It catalyses the reaction 4-(phosphooxy)-L-threonine + 2-oxoglutarate = (R)-3-hydroxy-2-oxo-4-phosphooxybutanoate + L-glutamate. Its pathway is amino-acid biosynthesis; L-serine biosynthesis; L-serine from 3-phospho-D-glycerate: step 2/3. It functions in the pathway cofactor biosynthesis; pyridoxine 5'-phosphate biosynthesis; pyridoxine 5'-phosphate from D-erythrose 4-phosphate: step 3/5. Functionally, catalyzes the reversible conversion of 3-phosphohydroxypyruvate to phosphoserine and of 3-hydroxy-2-oxo-4-phosphonooxybutanoate to phosphohydroxythreonine. In Bordetella pertussis (strain Tohama I / ATCC BAA-589 / NCTC 13251), this protein is Phosphoserine aminotransferase.